Reading from the N-terminus, the 864-residue chain is Nitrate reductase [NADH] (864 aa).

Cys139 is a Mo-molybdopterin binding site. The Cytochrome b5 heme-binding domain maps to 497-572; the sequence is PRQYTMEEVA…LAQYYIGDLV (76 aa). Residues His532 and His555 each contribute to the heme site. The region spanning 606–718 is the FAD-binding FR-type domain; sequence RQKVKLPLIE…KGPLGHFVYD (113 aa). FAD is bound by residues 658-661, 675-679, Phe680, Phe687, 692-694, and Thr746; these read RAYT, LIKVY, and KMS.

This sequence belongs to the nitrate reductase family. Homodimer. FAD is required as a cofactor. Heme serves as cofactor. Requires Mo-molybdopterin as cofactor.

It catalyses the reaction nitrite + NAD(+) + H2O = nitrate + NADH + H(+). In terms of biological role, nitrate reductase is a key enzyme involved in the first step of nitrate assimilation in plants, fungi and bacteria. In Volvox carteri (Green alga), this protein is Nitrate reductase [NADH] (NITA).